We begin with the raw amino-acid sequence, 888 residues long: Translation initiation factor IF-2 (888 aa).

Disordered regions lie at residues 96 to 122 (TTKQDESDAAGKRAAEDVSLRTAEAPE) and 158 to 302 (ELKE…SAPT). Basic and acidic residues-rich tracts occupy residues 98–114 (KQDESDAAGKRAAEDVS) and 158–167 (ELKEKQEKRR). Residues 181–206 (TQVQEPGSETAAVSGSVAATQPESTE) show a composition bias toward polar residues. Positions 207 to 225 (TAAVTPSATITVTTQTTPA) are enriched in low complexity. Basic and acidic residues-rich tracts occupy residues 226–243 (AKERAPQKPAVKPEEKGE) and 253–269 (EAWKDEPVKRRESKARG). The tr-type G domain maps to 390–559 (SRAPVVTVMG…LLQAEVLELK (170 aa)). The segment at 399–406 (GHVDHGKT) is G1. 399 to 406 (GHVDHGKT) contributes to the GTP binding site. Positions 424–428 (GITQH) are G2. The segment at 445–448 (DTPG) is G3. GTP is bound by residues 445-449 (DTPGH) and 499-502 (NKMD). Residues 499–502 (NKMD) form a G4 region. The segment at 535–537 (SAK) is G5.

It belongs to the TRAFAC class translation factor GTPase superfamily. Classic translation factor GTPase family. IF-2 subfamily.

It is found in the cytoplasm. Its function is as follows. One of the essential components for the initiation of protein synthesis. Protects formylmethionyl-tRNA from spontaneous hydrolysis and promotes its binding to the 30S ribosomal subunits. Also involved in the hydrolysis of GTP during the formation of the 70S ribosomal complex. This Nitrosomonas eutropha (strain DSM 101675 / C91 / Nm57) protein is Translation initiation factor IF-2.